The primary structure comprises 398 residues: Cap-specific mRNA (nucleoside-2'-O-)-methyltransferase 1 (398 aa).

In terms of domain architecture, RrmJ-type SAM-dependent 2'-O-MTase spans 85–298 (QFSNRAGHKL…ERYLVCVDFL (214 aa)). G132 and D211 together coordinate S-adenosyl-L-methionine. K252 functions as the Proton acceptor in the catalytic mechanism. Positions 371–398 (LKAKETTTRTSAESDDSPLSSRESCKDG) are disordered.

It carries out the reaction a 5'-end (N(7)-methyl 5'-triphosphoguanosine)-ribonucleoside in mRNA + S-adenosyl-L-methionine = a 5'-end (N(7)-methyl 5'-triphosphoguanosine)-(2'-O-methyl-ribonucleoside) in mRNA + S-adenosyl-L-homocysteine + H(+). Its function is as follows. S-adenosyl-L-methionine-dependent methyltransferase that mediates RNA cap1 2'-O-ribose methylation to the 5'-cap structure of RNAs. Methylates the ribose of the first nucleotide of a m(7)GpppG-capped mRNA to produce m(7)GpppNmp (cap1). This is Cap-specific mRNA (nucleoside-2'-O-)-methyltransferase 1 from Leishmania braziliensis.